The primary structure comprises 235 residues: Small ribosomal subunit protein uS2 (235 aa).

The protein belongs to the universal ribosomal protein uS2 family.

This Synechococcus sp. (strain RCC307) protein is Small ribosomal subunit protein uS2.